We begin with the raw amino-acid sequence, 628 residues long: Phosphomethylpyrimidine synthase (628 aa).

Residues Asn229, Met258, Tyr287, His323, 343–345, 384–387, and Glu423 each bind substrate; these read SRG and DGLR. His427 contributes to the Zn(2+) binding site. Position 450 (Tyr450) interacts with substrate. His491 contributes to the Zn(2+) binding site. Residues Cys571, Cys574, and Cys579 each coordinate [4Fe-4S] cluster.

The protein belongs to the ThiC family. Homodimer. [4Fe-4S] cluster is required as a cofactor.

The enzyme catalyses 5-amino-1-(5-phospho-beta-D-ribosyl)imidazole + S-adenosyl-L-methionine = 4-amino-2-methyl-5-(phosphooxymethyl)pyrimidine + CO + 5'-deoxyadenosine + formate + L-methionine + 3 H(+). The protein operates within cofactor biosynthesis; thiamine diphosphate biosynthesis. Functionally, catalyzes the synthesis of the hydroxymethylpyrimidine phosphate (HMP-P) moiety of thiamine from aminoimidazole ribotide (AIR) in a radical S-adenosyl-L-methionine (SAM)-dependent reaction. This Variovorax paradoxus (strain S110) protein is Phosphomethylpyrimidine synthase.